We begin with the raw amino-acid sequence, 787 residues long: Phenylalanine--tRNA ligase beta subunit (787 aa).

One can recognise a tRNA-binding domain in the interval Ala39 to Arg149. Positions Pro400–Asp475 constitute a B5 domain. Residues Asp453, Asp459, Glu462, and Glu463 each contribute to the Mg(2+) site. One can recognise an FDX-ACB domain in the interval Ser694–Arg786.

The protein belongs to the phenylalanyl-tRNA synthetase beta subunit family. Type 1 subfamily. Tetramer of two alpha and two beta subunits. Requires Mg(2+) as cofactor.

It is found in the cytoplasm. It carries out the reaction tRNA(Phe) + L-phenylalanine + ATP = L-phenylalanyl-tRNA(Phe) + AMP + diphosphate + H(+). This chain is Phenylalanine--tRNA ligase beta subunit (pheT), found in Neisseria meningitidis serogroup A / serotype 4A (strain DSM 15465 / Z2491).